Here is a 176-residue protein sequence, read N- to C-terminus: Probable inosine/xanthosine triphosphatase (176 aa).

D36 contributes to the Mg(2+) binding site.

Belongs to the YjjX NTPase family. In terms of assembly, homodimer. Mg(2+) is required as a cofactor. It depends on Mn(2+) as a cofactor.

It catalyses the reaction XTP + H2O = XDP + phosphate + H(+). It carries out the reaction ITP + H2O = IDP + phosphate + H(+). In terms of biological role, phosphatase that hydrolyzes non-canonical purine nucleotides such as XTP and ITP to their respective diphosphate derivatives. Probably excludes non-canonical purines from DNA/RNA precursor pool, thus preventing their incorporation into DNA/RNA and avoiding chromosomal lesions. In Saccharolobus solfataricus (strain ATCC 35092 / DSM 1617 / JCM 11322 / P2) (Sulfolobus solfataricus), this protein is Probable inosine/xanthosine triphosphatase.